The chain runs to 356 residues: Photosystem II protein D1 4 (356 aa).

Transmembrane regions (helical) follow at residues 32-49, 121-136, and 145-159; these read YIGW…AATT, HFLI…FWEL, and WIAV…AATS. Residue His121 coordinates chlorophyll a. The [CaMn4O5] cluster site is built by Asp173 and Asp192. A helical transmembrane segment spans residues 200 to 221; it reads FHMLGVAGVFGGALLSSLHGSL. His201 serves as a coordination point for chlorophyll a. His218 is a binding site for a quinone. Fe cation is bound by residues His218 and His276. Residues 278-292 traverse the membrane as a helical segment; sequence LLAALPTIGIWFAAM. Position 336 (His336) interacts with [CaMn4O5] cluster.

It belongs to the reaction center PufL/M/PsbA/D family. As to quaternary structure, PSII is composed of 1 copy each of membrane proteins PsbA, PsbB, PsbC, PsbD, PsbE, PsbF, PsbH, PsbI, PsbJ, PsbK, PsbL, PsbM, PsbT, PsbX, PsbY, PsbZ, Psb30/Ycf12, peripheral proteins PsbO, CyanoQ (PsbQ), PsbU, PsbV and a large number of cofactors. It forms dimeric complexes. It depends on The D1/D2 heterodimer binds P680, chlorophylls that are the primary electron donor of PSII, and subsequent electron acceptors. It shares a non-heme iron and each subunit binds pheophytin, quinone, additional chlorophylls, carotenoids and lipids. D1 provides most of the ligands for the Mn4-Ca-O5 cluster of the oxygen-evolving complex (OEC). There is also a Cl(-1) ion associated with D1 and D2, which is required for oxygen evolution. The PSII complex binds additional chlorophylls, carotenoids and specific lipids. as a cofactor. In terms of processing, tyr-164 forms a radical intermediate that is referred to as redox-active TyrZ, YZ or Y-Z.

It localises to the cellular thylakoid membrane. The enzyme catalyses 2 a plastoquinone + 4 hnu + 2 H2O = 2 a plastoquinol + O2. Its function is as follows. Photosystem II (PSII) is a light-driven water:plastoquinone oxidoreductase that uses light energy to abstract electrons from H(2)O, generating O(2) and a proton gradient subsequently used for ATP formation. It consists of a core antenna complex that captures photons, and an electron transfer chain that converts photonic excitation into a charge separation. The D1/D2 (PsbA/PsbD) reaction center heterodimer binds P680, the primary electron donor of PSII as well as several subsequent electron acceptors. This chain is Photosystem II protein D1 4, found in Trichormus variabilis (strain ATCC 29413 / PCC 7937) (Anabaena variabilis).